A 288-amino-acid polypeptide reads, in one-letter code: Mortality factor 4-like protein 2 (288 aa).

Polar residues predominate over residues 1-15; that stretch reads MSSRKQASQTRGQQS. The interval 1–115 is disordered; the sequence is MSSRKQASQT…DPTVESEEAF (115 aa). Ser71 carries the phosphoserine modification. An MRG domain is found at 117 to 288; it reads SRMEVKVKIP…ASADYHRKAL (172 aa).

In terms of assembly, component of the NuA4 histone acetyltransferase complex which contains the catalytic subunit KAT5/TIP60 and the subunits EP400, TRRAP/PAF400, BRD8/SMAP, EPC1, DMAP1/DNMAP1, RUVBL1/TIP49, RUVBL2, ING3, actin, ACTL6A/BAF53A, MORF4L1/MRG15, MORF4L2/MRGX, MRGBP, YEATS4/GAS41 and VPS72/YL1. The NuA4 complex interacts with MYC and the adenovirus E1A protein. MORF4L1 may also participate in the formation of NuA4 related complexes which lack the KAT5/TIP60 catalytic subunit, but which include the SWI/SNF related protein SRCAP. Component of the MSIN3A histone deacetylase complex, which includes SIN3A, HDAC2, ARID4B, MORF4L1, RBBP4/RbAp48, and RBBP7/RbAp46. Interacts with MRFAP1 and RB1. May also interact with one or more as yet undefined members of the TLE (transducin-like enhancer of split) family of transcriptional repressors.

It is found in the nucleus. Component of the NuA4 histone acetyltransferase complex which is involved in transcriptional activation of select genes principally by acetylation of nucleosomal histone H4 and H2A. This modification may both alter nucleosome - DNA interactions and promote interaction of the modified histones with other proteins which positively regulate transcription. This complex may be required for the activation of transcriptional programs associated with oncogene and proto-oncogene mediated growth induction, tumor suppressor mediated growth arrest and replicative senescence, apoptosis, and DNA repair. The NuA4 complex ATPase and helicase activities seem to be, at least in part, contributed by the association of RUVBL1 and RUVBL2 with EP400. NuA4 may also play a direct role in DNA repair when directly recruited to sites of DNA damage. Also a component of the MSIN3A complex which acts to repress transcription by deacetylation of nucleosomal histones. The protein is Mortality factor 4-like protein 2 (Morf4l2) of Rattus norvegicus (Rat).